The following is a 557-amino-acid chain: Potassium-transporting ATPase potassium-binding subunit (557 aa).

The next 12 helical transmembrane spans lie at 5–25, 63–83, 132–152, 170–190, 253–273, 283–303, 329–349, 356–376, 379–399, 416–436, 484–504, and 526–546; these read GFLL…PLGS, LCAI…MLLG, GLTV…FALI, LLRI…LFFI, FVQM…FGEV, LLWA…WAEV, VLVS…AVIA, ALGG…FGGV, GLYG…LMIG, LTAL…ALAM, LLAF…MAIA, and LFVG…FIPA.

The protein belongs to the KdpA family. The system is composed of three essential subunits: KdpA, KdpB and KdpC.

It is found in the cell inner membrane. In terms of biological role, part of the high-affinity ATP-driven potassium transport (or Kdp) system, which catalyzes the hydrolysis of ATP coupled with the electrogenic transport of potassium into the cytoplasm. This subunit binds the periplasmic potassium ions and delivers the ions to the membrane domain of KdpB through an intramembrane tunnel. The protein is Potassium-transporting ATPase potassium-binding subunit of Escherichia coli (strain K12 / MC4100 / BW2952).